Consider the following 615-residue polypeptide: Medium-chain acyl-CoA ligase ACSF2, mitochondrial (615 aa).

Residues 1-49 (MAVYLGMLRLGRLCVASLGARGPRTPLSRPWPNSKLQGVRAFSSGMVDC) constitute a mitochondrion transit peptide. Lys-179 carries the post-translational modification N6-acetyllysine. Position 182 is an N6-acetyllysine; alternate (Lys-182). Position 182 is an N6-succinyllysine; alternate (Lys-182). Residue Lys-199 is modified to N6-acetyllysine. 263–271 (TSGTTGNPK) provides a ligand contact to ATP. Residues Lys-340 and Lys-398 each carry the N6-acetyllysine modification. Lys-478 carries the N6-succinyllysine modification. Positions 493 and 508 each coordinate ATP. At Lys-510 the chain carries N6-acetyllysine. Lys-544 and Lys-570 each carry N6-acetyllysine; alternate. N6-succinyllysine; alternate is present on residues Lys-544 and Lys-570. Position 599 (Lys-599) interacts with ATP. Lys-599 carries the N6-succinyllysine modification.

It belongs to the ATP-dependent AMP-binding enzyme family.

It is found in the mitochondrion. It carries out the reaction a medium-chain fatty acid + ATP + CoA = a medium-chain fatty acyl-CoA + AMP + diphosphate. The enzyme catalyses octanoate + ATP + CoA = octanoyl-CoA + AMP + diphosphate. In terms of biological role, acyl-CoA synthases catalyze the initial reaction in fatty acid metabolism, by forming a thioester with CoA. Has some preference toward medium-chain substrates. Plays a role in adipocyte differentiation. The sequence is that of Medium-chain acyl-CoA ligase ACSF2, mitochondrial from Rattus norvegicus (Rat).